The chain runs to 898 residues: Interleukin enhancer-binding factor 3-B (898 aa).

Residues 5–379 (RIFLNDDRHV…ALKRPIEEDG (375 aa)) form the DZF domain. Disordered stretches follow at residues 52 to 87 (QEKD…NPTR), 374 to 403 (PIEE…PPQA), 468 to 529 (LPTG…VMEL), 627 to 651 (PPPQ…RGGF), and 711 to 799 (GEGY…QGAA). Acidic residues predominate over residues 61–71 (ENPEPEETETT). Basic and acidic residues-rich tracts occupy residues 72–81 (EEGKDSEAKT) and 374–384 (PIEEDGEDKSP). The Bipartite nuclear localization signal motif lies at 372–390 (KRPIEEDGEDKSPSKKKKK). One can recognise a DRBM 1 domain in the interval 399–468 (EPPQAMNALM…AVKVLQDMGL (70 aa)). Positions 474-483 (EKEESVDESE) are enriched in acidic residues. The segment covering 489 to 513 (QTPSQTADSEQADSSAGDQSESGKQ) has biased composition (polar residues). A DRBM 2 domain is found at 521 to 587 (HGKNPVMELN…ALSALEKLFP (67 aa)). Gly residues predominate over residues 637–651 (RGGMNRGRGRGRGGF). The segment covering 717–747 (PTPPKPFVKKPPPPQQQQQPPPQHASNPPKP) has biased composition (pro residues). A compositionally biased stretch (low complexity) spans 749 to 782 (YNQGYQGHQGGQQQQQPQQQQQQTYNQNQYSNYG).

As to quaternary structure, a component of a ybx2/frgy2-containing mRNA-ribonucleoprotein (mRNP) complex. Also a component of the CCAAT box transcription factor (CBTF) complex. In terms of processing, phosphorylated. Phosphorylation affects nuclear translocation. Methylated by protein arginine N-methyltransferase 1 (prmt1b) in the RGG-rich domain. Methylation decreases DNA-binding and thereby decreases transcription of the gata2 gene, but does not regulate dsRNA binding or subcellular localization.

Its subcellular location is the nucleus. It is found in the cytoplasm. Its function is as follows. RNA-binding protein that plays an essential role in the biogenesis of circular RNAs (circRNAs) which are produced by back-splicing circularization of pre-mRNAs. Within the nucleus, promotes circRNAs processing by stabilizing the regulatory elements residing in the flanking introns of the circularized exons. Plays thereby a role in the back-splicing of a subset of circRNAs. As a consequence, participates in a wide range of transcriptional and post-transcriptional processes. Binds to poly-U elements and AU-rich elements (AREs) in the 3'-UTR of target mRNAs. Upon viral infection, ILF3 accumulates in the cytoplasm and participates in the innate antiviral response. Mechanistically, ILF3 becomes phosphorylated and activated by the double-stranded RNA-activated protein kinase/PKR which releases ILF3 from cellular mature circRNAs. In turn, unbound ILF3 molecules are able to interact with and thus inhibit viral mRNAs. Has a cytoplasmic role early in development as part of a ribonucleoprotein (mRNP) complex which may regulate mRNA transport and/or translation. Following nuclear localization at the mid-blastula transition, acts as a transcription factor and binds the 5'-CCAAT-3' promoter sequence to regulate transcription of the gata2 gene as a subunit of the CCAAT box transcription factor (CBTF). Its role as an mRNP component negatively regulates its activity as a transcription factor by precluding its nuclear localization. This Xenopus laevis (African clawed frog) protein is Interleukin enhancer-binding factor 3-B (ilf3-b).